A 549-amino-acid polypeptide reads, in one-letter code: Formate--tetrahydrofolate ligase (549 aa).

Threonine 60–threonine 67 serves as a coordination point for ATP.

It belongs to the formate--tetrahydrofolate ligase family.

The enzyme catalyses (6S)-5,6,7,8-tetrahydrofolate + formate + ATP = (6R)-10-formyltetrahydrofolate + ADP + phosphate. The protein operates within one-carbon metabolism; tetrahydrofolate interconversion. The polypeptide is Formate--tetrahydrofolate ligase (Campylobacter concisus (strain 13826)).